The primary structure comprises 782 residues: Protein VAC14 homolog (782 aa).

The residue at position 1 (M1) is an N-acetylmethionine. HEAT repeat units lie at residues K5–A42, L89–G126, F171–I208, and D212–K249. Position 11 is a phosphothreonine (T11). Disordered stretches follow at residues E335–C372 and S471–S517. The HEAT 5 repeat unit spans residues R438–G475. Over residues D478 to L488 the composition is skewed to low complexity. The residue at position 499 (T499) is a Phosphothreonine. Residues L506–S517 are compositionally biased toward polar residues. S517 carries the post-translational modification Phosphoserine. One copy of the HEAT 6 repeat lies at L560–E598. S743 is subject to Phosphoserine. Positions G773–D777 are mediates interaction with the PDZ domain of NOS1.

Belongs to the VAC14 family. In terms of assembly, forms pentamers. Component of the PI(3,5)P2 regulatory complex/PAS complex, at least composed of PIKFYVE, FIG4 and VAC14. VAC14 nucleates the assembly of the complex and serves as a scaffold by pentamerizing into a star-shaped structure, which can bind a single copy each of PIKFYVE and FIG4 and coordinates their activities. Interacts with NOS1. (Microbial infection) Interacts with HTLV-1 Tax. As to expression, ubiquitously expressed.

The protein resides in the endosome membrane. Its subcellular location is the microsome membrane. Its function is as follows. Scaffold protein component of the PI(3,5)P2 regulatory complex which regulates both the synthesis and turnover of phosphatidylinositol 3,5-bisphosphate (PtdIns(3,5)P2). Pentamerizes into a star-shaped structure and nucleates the assembly of the complex. The pentamer binds a single copy each of PIKFYVE and FIG4 and coordinates both PIKfyve kinase activity and FIG4 phosphatase activity, being required to maintain normal levels of phosphatidylinositol 3-phosphate (PtdIns(3)P) and phosphatidylinositol 5-phosphate (PtdIns(5)P). Plays a role in the biogenesis of endosome carrier vesicles (ECV) / multivesicular bodies (MVB) transport intermediates from early endosomes. The chain is Protein VAC14 homolog (VAC14) from Homo sapiens (Human).